Reading from the N-terminus, the 285-residue chain is Phycobilisome 31.6 kDa linker polypeptide, phycocyanin-associated, rod (285 aa).

Residues 1–180 (MPITTAASRL…LYRGYATSDR (180 aa)) enclose the PBS-linker domain.

The protein belongs to the phycobilisome linker protein family.

It is found in the cellular thylakoid membrane. Rod linker protein, associated with phycocyanin. Linker polypeptides determine the state of aggregation and the location of the disk-shaped phycobiliprotein units within the phycobilisome and modulate their spectroscopic properties in order to mediate a directed and optimal energy transfer. This Microchaete diplosiphon (Fremyella diplosiphon) protein is Phycobilisome 31.6 kDa linker polypeptide, phycocyanin-associated, rod (cpcI3).